The chain runs to 340 residues: Ephrin-B3 (340 aa).

The N-terminal stretch at 1 to 27 (MGAPHFGPGGVQVGALLLLGFAGLVSG) is a signal peptide. One can recognise an Ephrin RBD domain in the interval 28-167 (LSLEPVYWNS…TRGMKVLLRV (140 aa)). Topologically, residues 28-227 (LSLEPVYWNS…GPLPPPSMPA (200 aa)) are extracellular. Intrachain disulfides connect C62–C104 and C92–C156. The segment at 168–227 (GQSPRGGAVPRKPVSEMPMERDRGAAHSAEPGRDTIPGDPSSNATSRGAEGPLPPPSMPA) is disordered. A compositionally biased stretch (basic and acidic residues) spans 185–200 (PMERDRGAAHSAEPGR). N210 carries an N-linked (GlcNAc...) asparagine glycan. Residues 228–248 (VAGAAGGMALLLLGVAGAGGA) traverse the membrane as a helical segment. The Cytoplasmic segment spans residues 249-340 (MCWRRRRAKP…QSPPNIYYKV (92 aa)). A disordered region spans residues 254-300 (RRAKPSESRHPGPGSFGRGGSLGLGGGGGMGPREAEPGELGIALRGG). Gly residues predominate over residues 267–284 (GSFGRGGSLGLGGGGGMG). The residue at position 271 (R271) is an Omega-N-methylarginine. Residue S274 is modified to Phosphoserine. The PDZ-binding motif lies at 338–340 (YKV).

This sequence belongs to the ephrin family. Interacts with GRIP1 and GRIP2. As to expression, expressed on lateral floor plate cells, specifically on commissural axon segments that have passed through the floor plate. Expressed in cells of the retinal ganglion cell layer during retinal axon guidance to the optic disk. Expressed in myogenic progenitor cells.

The protein resides in the membrane. Functionally, cell surface transmembrane ligand for Eph receptors, a family of receptor tyrosine kinases which are crucial for migration, repulsion and adhesion during neuronal, vascular and epithelial development. Binds promiscuously Eph receptors residing on adjacent cells, leading to contact-dependent bidirectional signaling into neighboring cells. The signaling pathway downstream of the receptor is referred to as forward signaling while the signaling pathway downstream of the ephrin ligand is referred to as reverse signaling. May play a pivotal role in forebrain function. Binds to, and induce the collapse of, commissural axons/growth cones in vitro. May play a role in constraining the orientation of longitudinally projecting axons. This is Ephrin-B3 (Efnb3) from Mus musculus (Mouse).